The chain runs to 1025 residues: Multidrug resistance protein MdtC (1025 aa).

Helical transmembrane passes span 3–23, 333–353, 360–380, 387–407, 431–451, 463–483, 528–548, 853–873, 875–895, 897–917, 953–973, and 984–1004; these read FFALFIYRPVATILLSVAITL, EVEQTLIISVALVILVVFLFL, IIPAVAVPVSLIGTFAAMYLC, LSLMALTIATGFVVDDAIVVL, VGFTVLSMSLSLVAVFLPLLL, FAVTLSVAIGISLLVSLTLTP, LVGMVLLGTIALNIWLYISIP, VILIIAAIATVYIVLGILYES, VHPLTILSTLPSAGVGALLAL, LFNAPFSLIALIGIMLLIGIV, PIMMTTLAALFGALPLVLSGG, and ITIVGGLVMSQLLTLYTTPVV.

Belongs to the resistance-nodulation-cell division (RND) (TC 2.A.6) family. MdtC subfamily. As to quaternary structure, part of a tripartite efflux system composed of MdtA, MdtB and MdtC. MdtC forms a heteromultimer with MdtB.

The protein resides in the cell inner membrane. Its function is as follows. The MdtABC tripartite complex confers resistance against novobiocin and deoxycholate. This Escherichia coli O157:H7 (strain EC4115 / EHEC) protein is Multidrug resistance protein MdtC.